The sequence spans 150 residues: CCAAT/enhancer-binding protein gamma (150 aa).

Lysine 3 is covalently cross-linked (Glycyl lysine isopeptide (Lys-Gly) (interchain with G-Cter in SUMO2)). Positions 27 to 94 are disordered; the sequence is GLQQVPQLVP…QKAQDTLQRV (68 aa). Low complexity predominate over residues 28–37; sequence LQQVPQLVPA. Basic and acidic residues predominate over residues 56-72; it reads SPMDRNSDEYRQRRERN. A bZIP domain is found at 62-125; sequence SDEYRQRRER…SVLKDLFLEH (64 aa). Positions 66–93 are basic motif; sequence RQRRERNNMAVKKSRLKSKQKAQDTLQR. Positions 97 to 118 are leucine-zipper; the sequence is LKEENERLEAKIKLLTKELSVL. The tract at residues 129 to 150 is disordered; it reads LADNVQPISTETTATNSDNPGQ. The span at 134–150 shows a compositional bias: polar residues; sequence QPISTETTATNSDNPGQ.

The protein belongs to the bZIP family. C/EBP subfamily. In terms of assembly, binds DNA as a dimer and can form stable heterodimers with CEBPA. Can form stable heterodimers with CEBPB. Interacts with ZNF638; this interaction increases transcriptional activation. In terms of tissue distribution, ubiquitous.

Its subcellular location is the nucleus. Transcription factor that binds to the promoter and the enhancer regions of target genes. Binds to the promoter and the enhancer of the immunoglobulin heavy chain. Binds to GPE1, a cis-acting element in the G-CSF gene promoter. Binds to the enhancer element PRE-I (positive regulatory element-I) of the IL-4 gene. Binds to the promoter and the enhancer of the alpha-1-fetoprotein gene. This chain is CCAAT/enhancer-binding protein gamma (Cebpg), found in Mus musculus (Mouse).